Here is a 172-residue protein sequence, read N- to C-terminus: Large ribosomal subunit protein uL10 (172 aa).

The protein belongs to the universal ribosomal protein uL10 family. Part of the ribosomal stalk of the 50S ribosomal subunit. The N-terminus interacts with L11 and the large rRNA to form the base of the stalk. The C-terminus forms an elongated spine to which L12 dimers bind in a sequential fashion forming a multimeric L10(L12)X complex.

Forms part of the ribosomal stalk, playing a central role in the interaction of the ribosome with GTP-bound translation factors. The polypeptide is Large ribosomal subunit protein uL10 (Dinoroseobacter shibae (strain DSM 16493 / NCIMB 14021 / DFL 12)).